The sequence spans 246 residues: Hydroxyacylglutathione hydrolase (246 aa).

Zn(2+)-binding residues include H58, H60, D62, H63, H117, D137, and H175.

The protein belongs to the metallo-beta-lactamase superfamily. Glyoxalase II family. Monomer. Requires Zn(2+) as cofactor.

The catalysed reaction is an S-(2-hydroxyacyl)glutathione + H2O = a 2-hydroxy carboxylate + glutathione + H(+). It participates in secondary metabolite metabolism; methylglyoxal degradation; (R)-lactate from methylglyoxal: step 2/2. In terms of biological role, thiolesterase that catalyzes the hydrolysis of S-D-lactoyl-glutathione to form glutathione and D-lactic acid. The sequence is that of Hydroxyacylglutathione hydrolase from Prochlorococcus marinus (strain MIT 9301).